The following is a 106-amino-acid chain: Iron-sulfur cluster assembly protein CyaY (106 aa).

It belongs to the frataxin family.

Involved in iron-sulfur (Fe-S) cluster assembly. May act as a regulator of Fe-S biogenesis. The polypeptide is Iron-sulfur cluster assembly protein CyaY (Escherichia fergusonii (strain ATCC 35469 / DSM 13698 / CCUG 18766 / IAM 14443 / JCM 21226 / LMG 7866 / NBRC 102419 / NCTC 12128 / CDC 0568-73)).